A 302-amino-acid chain; its full sequence is Ornithine carbamoyltransferase (302 aa).

Carbamoyl phosphate-binding positions include 52 to 55 (STRT), Gln79, Arg103, and 130 to 133 (HPCQ). Residues Asn161, Asp221, and 225-226 (SM) contribute to the L-ornithine site. Residues 261-262 (CL) and Arg289 contribute to the carbamoyl phosphate site.

Belongs to the aspartate/ornithine carbamoyltransferase superfamily. OTCase family.

The protein resides in the cytoplasm. It carries out the reaction carbamoyl phosphate + L-ornithine = L-citrulline + phosphate + H(+). Its pathway is amino-acid biosynthesis; L-arginine biosynthesis; L-arginine from L-ornithine and carbamoyl phosphate: step 1/3. In terms of biological role, reversibly catalyzes the transfer of the carbamoyl group from carbamoyl phosphate (CP) to the N(epsilon) atom of ornithine (ORN) to produce L-citrulline. This Methanospirillum hungatei JF-1 (strain ATCC 27890 / DSM 864 / NBRC 100397 / JF-1) protein is Ornithine carbamoyltransferase.